A 97-amino-acid chain; its full sequence is MNKLLIGLVNVYKKFISPILPPTCRYYPTCSSYMIDALKKHGAILGLIMGLARILRCNPFIKGGVDPVPDYFTLRRNPHPERYEDEIIAQAFHSNKK.

Belongs to the UPF0161 family.

It is found in the cell membrane. Could be involved in insertion of integral membrane proteins into the membrane. The polypeptide is Putative membrane protein insertion efficiency factor (Lactobacillus johnsonii (strain CNCM I-12250 / La1 / NCC 533)).